We begin with the raw amino-acid sequence, 678 residues long: Vacuolar fusion protein mon1 (678 aa).

Disordered regions lie at residues 1 to 116, 449 to 474, and 568 to 591; these read MDRD…YTSP, EENNSNNTNNPEQPPQPPPPKPVTSP, and FETSSPPLPSSSPSENGSSQKTTE. A compositionally biased stretch (low complexity) spans 10 to 20; sequence NDGTNDNNDTT. Residues 63–77 are compositionally biased toward polar residues; it reads RPTTQVSTIDISTLS. The span at 87 to 105 shows a compositional bias: low complexity; that stretch reads STSATSATSATSATRSVAS. A compositionally biased stretch (polar residues) spans 106-116; it reads PQSSASGYTSP. Positions 450–459 are enriched in low complexity; sequence ENNSNNTNNP. The segment covering 460-471 has biased composition (pro residues); it reads EQPPQPPPPKPV.

The protein belongs to the MON1/SAND family.

It localises to the endosome. It is found in the multivesicular body membrane. Its subcellular location is the prevacuolar compartment membrane. The protein localises to the vacuole membrane. In complex with CCZ1, is required for multiple vacuole delivery pathways including the cytoplasm to vacuole transport (Cvt), autophagy, pexophagy and endocytosis. The MON1-CCZ1 complex acts at the fusion of vesicles with the vacuole, through its regulation of the SNARE complex during the coordinated priming and docking stages of fusion, and particularly at the stage of tethering/docking. This is Vacuolar fusion protein mon1 (apg-13) from Neurospora crassa (strain ATCC 24698 / 74-OR23-1A / CBS 708.71 / DSM 1257 / FGSC 987).